Consider the following 114-residue polypeptide: FK506-binding protein 1 (114 aa).

The region spanning glycine 26–asparagine 114 is the PPIase FKBP-type domain.

It belongs to the FKBP-type PPIase family. FKBP1 subfamily.

Its subcellular location is the cytoplasm. It catalyses the reaction [protein]-peptidylproline (omega=180) = [protein]-peptidylproline (omega=0). Inhibited by both FK506 and rapamycin. Its function is as follows. PPIases accelerate the folding of proteins. It catalyzes the cis-trans isomerization of proline imidic peptide bonds in oligopeptides. This chain is FK506-binding protein 1 (FPR1), found in Candida glabrata (strain ATCC 2001 / BCRC 20586 / JCM 3761 / NBRC 0622 / NRRL Y-65 / CBS 138) (Yeast).